Here is a 448-residue protein sequence, read N- to C-terminus: Deoxyguanosinetriphosphate triphosphohydrolase-like protein (448 aa).

Residues 67–260 (RLTHSLEVSQ…MELADDIAYG (194 aa)) enclose the HD domain.

This sequence belongs to the dGTPase family. Type 2 subfamily.

This chain is Deoxyguanosinetriphosphate triphosphohydrolase-like protein, found in Aliivibrio fischeri (strain MJ11) (Vibrio fischeri).